Consider the following 567-residue polypeptide: Hydroxylamine reductase 2 (567 aa).

Residues Cys-5, Cys-8, Cys-17, and Cys-23 each contribute to the [4Fe-4S] cluster site. Positions 262, 286, 330, 421, 449, 474, 509, and 511 each coordinate hybrid [4Fe-2O-2S] cluster. Cys-421 carries the cysteine persulfide modification.

The protein belongs to the HCP family. [4Fe-4S] cluster serves as cofactor. Hybrid [4Fe-2O-2S] cluster is required as a cofactor.

It is found in the cytoplasm. The catalysed reaction is A + NH4(+) + H2O = hydroxylamine + AH2 + H(+). Catalyzes the reduction of hydroxylamine to form NH(3) and H(2)O. The polypeptide is Hydroxylamine reductase 2 (Clostridium acetobutylicum (strain ATCC 824 / DSM 792 / JCM 1419 / IAM 19013 / LMG 5710 / NBRC 13948 / NRRL B-527 / VKM B-1787 / 2291 / W)).